The primary structure comprises 205 residues: Small ribosomal subunit protein uS4 (205 aa).

The disordered stretch occupies residues 18–45; sequence NIWGRPKSPVNRREYGPGQHGQRRKGKL. Positions 94–157 constitute an S4 RNA-binding domain; it reads RRLDTVVYRA…KQLAFVLEAS (64 aa).

It belongs to the universal ribosomal protein uS4 family. In terms of assembly, part of the 30S ribosomal subunit. Contacts protein S5. The interaction surface between S4 and S5 is involved in control of translational fidelity.

One of the primary rRNA binding proteins, it binds directly to 16S rRNA where it nucleates assembly of the body of the 30S subunit. Its function is as follows. With S5 and S12 plays an important role in translational accuracy. In Rhodopseudomonas palustris (strain BisA53), this protein is Small ribosomal subunit protein uS4.